The chain runs to 457 residues: Bifunctional protein GlmU (457 aa).

The pyrophosphorylase stretch occupies residues 1–229 (MYNCAIILAA…YEEIMGVNSR (229 aa)). UDP-N-acetyl-alpha-D-glucosamine is bound by residues 8 to 11 (LAAG), lysine 22, glutamine 73, and 78 to 79 (GT). Aspartate 103 provides a ligand contact to Mg(2+). 4 residues coordinate UDP-N-acetyl-alpha-D-glucosamine: glycine 140, glutamate 155, asparagine 170, and asparagine 227. Residue asparagine 227 coordinates Mg(2+). Residues 230-250 (VQLSEAEIVMRKRINHKHMVN) are linker. Residues 251-457 (GVTFIDCEST…WLDKKGLLKK (207 aa)) are N-acetyltransferase. Residues arginine 332 and lysine 350 each coordinate UDP-N-acetyl-alpha-D-glucosamine. Residue histidine 362 is the Proton acceptor of the active site. The UDP-N-acetyl-alpha-D-glucosamine site is built by tyrosine 365 and asparagine 376. Acetyl-CoA contacts are provided by residues 385-386 (NY), alanine 422, and arginine 439.

It in the N-terminal section; belongs to the N-acetylglucosamine-1-phosphate uridyltransferase family. This sequence in the C-terminal section; belongs to the transferase hexapeptide repeat family. As to quaternary structure, homotrimer. Mg(2+) is required as a cofactor.

The protein localises to the cytoplasm. The catalysed reaction is alpha-D-glucosamine 1-phosphate + acetyl-CoA = N-acetyl-alpha-D-glucosamine 1-phosphate + CoA + H(+). The enzyme catalyses N-acetyl-alpha-D-glucosamine 1-phosphate + UTP + H(+) = UDP-N-acetyl-alpha-D-glucosamine + diphosphate. It functions in the pathway nucleotide-sugar biosynthesis; UDP-N-acetyl-alpha-D-glucosamine biosynthesis; N-acetyl-alpha-D-glucosamine 1-phosphate from alpha-D-glucosamine 6-phosphate (route II): step 2/2. The protein operates within nucleotide-sugar biosynthesis; UDP-N-acetyl-alpha-D-glucosamine biosynthesis; UDP-N-acetyl-alpha-D-glucosamine from N-acetyl-alpha-D-glucosamine 1-phosphate: step 1/1. Its pathway is bacterial outer membrane biogenesis; LPS lipid A biosynthesis. Functionally, catalyzes the last two sequential reactions in the de novo biosynthetic pathway for UDP-N-acetylglucosamine (UDP-GlcNAc). The C-terminal domain catalyzes the transfer of acetyl group from acetyl coenzyme A to glucosamine-1-phosphate (GlcN-1-P) to produce N-acetylglucosamine-1-phosphate (GlcNAc-1-P), which is converted into UDP-GlcNAc by the transfer of uridine 5-monophosphate (from uridine 5-triphosphate), a reaction catalyzed by the N-terminal domain. The polypeptide is Bifunctional protein GlmU (Clostridium botulinum (strain 657 / Type Ba4)).